The following is an 89-amino-acid chain: Co-chaperonin GroES (89 aa).

It belongs to the GroES chaperonin family. In terms of assembly, heptamer of 7 subunits arranged in a ring. Interacts with the chaperonin GroEL.

The protein localises to the cytoplasm. Its function is as follows. Together with the chaperonin GroEL, plays an essential role in assisting protein folding. The GroEL-GroES system forms a nano-cage that allows encapsulation of the non-native substrate proteins and provides a physical environment optimized to promote and accelerate protein folding. GroES binds to the apical surface of the GroEL ring, thereby capping the opening of the GroEL channel. This chain is Co-chaperonin GroES, found in Petrotoga mobilis (strain DSM 10674 / SJ95).